We begin with the raw amino-acid sequence, 555 residues long: Methyl-coenzyme M reductase subunit alpha (555 aa).

Coenzyme F430 is bound at residue glutamine 152. Coenzyme B is bound by residues arginine 230, 261–262 (KH), and arginine 275. Coenzyme M-binding residues include tyrosine 337 and tyrosine 448.

Belongs to the methyl-coenzyme M reductase alpha subunit family. In terms of assembly, MCR is a hexamer of two alpha, two beta, and two gamma chains, forming a dimer of heterotrimers. It depends on coenzyme F430 as a cofactor.

It is found in the cytoplasm. The enzyme catalyses coenzyme B + methyl-coenzyme M = methane + coenzyme M-coenzyme B heterodisulfide. Its pathway is one-carbon metabolism; methyl-coenzyme M reduction; methane from methyl-coenzyme M: step 1/1. In terms of biological role, component of the methyl-coenzyme M reductase (MCR) I that catalyzes the reductive cleavage of methyl-coenzyme M (CoM-S-CH3 or 2-(methylthio)ethanesulfonate) using coenzyme B (CoB or 7-mercaptoheptanoylthreonine phosphate) as reductant which results in the production of methane and the mixed heterodisulfide of CoB and CoM (CoM-S-S-CoB). This is the final step in methanogenesis. The polypeptide is Methyl-coenzyme M reductase subunit alpha (mcrA) (Methanococcus voltae).